The primary structure comprises 627 residues: Xaa-Pro aminopeptidase 1 (627 aa).

A peptide contacts are provided by arginine 88 and histidine 405. Positions 424, 435, and 498 each coordinate Mn(2+). The a peptide site is built by histidine 498, histidine 507, and glutamate 533. Mn(2+) is bound by residues glutamate 533 and glutamate 547.

The protein belongs to the peptidase M24B family. Homodimer. The cofactor is Mn(2+).

Its subcellular location is the cytoplasm. It is found in the cytosol. It catalyses the reaction Release of any N-terminal amino acid, including proline, that is linked to proline, even from a dipeptide or tripeptide.. In terms of biological role, metalloaminopeptidase that catalyzes the removal of a penultimate prolyl residue from the N-termini of peptides, such as Arg-Pro-Pro. The sequence is that of Xaa-Pro aminopeptidase 1 (xpnpep1) from Dictyostelium discoideum (Social amoeba).